A 342-amino-acid polypeptide reads, in one-letter code: Ferredoxin--NADP reductase (342 aa).

FAD is bound by residues Cys17, Asp36, Gln44, Tyr49, Ile89, Phe124, Asp289, and Thr330.

This sequence belongs to the ferredoxin--NADP reductase type 2 family. As to quaternary structure, homodimer. The cofactor is FAD.

It carries out the reaction 2 reduced [2Fe-2S]-[ferredoxin] + NADP(+) + H(+) = 2 oxidized [2Fe-2S]-[ferredoxin] + NADPH. This Rhodopseudomonas palustris (strain HaA2) protein is Ferredoxin--NADP reductase.